A 1394-amino-acid polypeptide reads, in one-letter code: DNA-directed RNA polymerase subunit beta' (1394 aa).

Residues Cys70, Cys72, Cys85, and Cys88 each coordinate Zn(2+). Mg(2+) contacts are provided by Asp470, Asp472, and Asp474. Zn(2+)-binding residues include Cys815, Cys889, Cys896, and Cys899.

This sequence belongs to the RNA polymerase beta' chain family. The RNAP catalytic core consists of 2 alpha, 1 beta, 1 beta' and 1 omega subunit. When a sigma factor is associated with the core the holoenzyme is formed, which can initiate transcription. The cofactor is Mg(2+). Requires Zn(2+) as cofactor.

The catalysed reaction is RNA(n) + a ribonucleoside 5'-triphosphate = RNA(n+1) + diphosphate. In terms of biological role, DNA-dependent RNA polymerase catalyzes the transcription of DNA into RNA using the four ribonucleoside triphosphates as substrates. This is DNA-directed RNA polymerase subunit beta' from Anaeromyxobacter sp. (strain K).